A 564-amino-acid polypeptide reads, in one-letter code: Rho guanine nucleotide exchange factor 9 (564 aa).

One can recognise an SH3 domain in the interval 8–67 (DSIVSAEAVWDHATMANRELAFKAGDVIKVLDASNKDWWWGQIDDEEGWFPASFVRLWVN). The segment at 100-110 (RDQMRANVINE) is interaction with GPHN. Positions 103 to 287 (MRANVINEIM…RNVTQQINER (185 aa)) constitute a DH domain. The 108-residue stretch at 318–425 (ELIYTGEMAW…WLRAFREERK (108 aa)) folds into the PH domain. Positions 451–470 (KVPKQKGVNSARSVPPSYPP) are disordered. At Ser-502 the chain carries Phosphoserine.

As to quaternary structure, interacts with GPHN.

It localises to the cytoplasm. The protein resides in the postsynaptic density. Acts as a guanine nucleotide exchange factor (GEF) for CDC42. Promotes formation of GPHN clusters. In Pongo abelii (Sumatran orangutan), this protein is Rho guanine nucleotide exchange factor 9 (ARHGEF9).